A 293-amino-acid chain; its full sequence is Glycine--tRNA ligase alpha subunit (293 aa).

It belongs to the class-II aminoacyl-tRNA synthetase family. As to quaternary structure, tetramer of two alpha and two beta subunits.

The protein resides in the cytoplasm. The enzyme catalyses tRNA(Gly) + glycine + ATP = glycyl-tRNA(Gly) + AMP + diphosphate. This Picosynechococcus sp. (strain ATCC 27264 / PCC 7002 / PR-6) (Agmenellum quadruplicatum) protein is Glycine--tRNA ligase alpha subunit.